Reading from the N-terminus, the 318-residue chain is Methionyl-tRNA formyltransferase (318 aa).

114–117 contacts (6S)-5,6,7,8-tetrahydrofolate; that stretch reads SVLP.

Belongs to the Fmt family.

The enzyme catalyses L-methionyl-tRNA(fMet) + (6R)-10-formyltetrahydrofolate = N-formyl-L-methionyl-tRNA(fMet) + (6S)-5,6,7,8-tetrahydrofolate + H(+). Its function is as follows. Attaches a formyl group to the free amino group of methionyl-tRNA(fMet). The formyl group appears to play a dual role in the initiator identity of N-formylmethionyl-tRNA by promoting its recognition by IF2 and preventing the misappropriation of this tRNA by the elongation apparatus. This Bdellovibrio bacteriovorus (strain ATCC 15356 / DSM 50701 / NCIMB 9529 / HD100) protein is Methionyl-tRNA formyltransferase.